Reading from the N-terminus, the 1478-residue chain is ATP-binding cassette transporter abc2 (1478 aa).

Over 1–25 (MVLEQDLDPFVGGNWMNSAYKGFTF) the chain is Vacuolar. A helical membrane pass occupies residues 26-46 (LSATWLAPNIYLLISGCLQYF). At 47-65 (YEVRKRSHYFHFRRFWTIW) the chain is on the cytoplasmic side. The helical transmembrane segment at 66-85 (LKSLVIMVLLFTHIYDCYKT) threads the bilayer. The N-linked (GlcNAc...) asparagine glycan is linked to Asn86. Residues 86-90 (NESVW) are Vacuolar-facing. Residues 91-104 (NVLSIITYFLALFL) traverse the membrane as a helical segment. The Cytoplasmic portion of the chain corresponds to 105-116 (HVVEQPTLRIPM). The helical transmembrane segment at 117–137 (ASLLMFWLFKFLASALVLLLR) threads the bilayer. The Vacuolar portion of the chain corresponds to 138 to 154 (PNYTMFPMLNVVPSITF). The N-linked (GlcNAc...) asparagine glycan is linked to Asn139. Residues 155–175 (FCSLVCLLAEIYVPPANRVWY) form a helical membrane-spanning segment. At 176–259 (PDDAAELEET…KKSSLYMWGV (84 aa)) the chain is on the cytoplasmic side. A helical membrane pass occupies residues 260 to 280 (LFLNHWKLTVVIIVLKLVQDV). The 290-residue stretch at 268-557 (TVVIIVLKLV…LPIVVSSVLE (290 aa)) folds into the ABC transmembrane type-1 1 domain. Topologically, residues 281 to 310 (VAFIQPNLIRKIVIFVSSYSSEHPQPPQVG) are vacuolar. A helical transmembrane segment spans residues 311-331 (FSLAIAMFLTNVVQTALLQQY). At 332 to 387 (FQLGMVLGMRWRSELITAIYRKSLRLSSAARQSRSVGDIVNYMSVDTQKVCDLTMF) the chain is on the cytoplasmic side. A helical transmembrane segment spans residues 388 to 408 (LFVIVSGPFQIVLALTNLYHL). Residues 409–411 (VGY) are Vacuolar-facing. Residues 412-432 (GALSGAFVTFLLFPCNVVIAS) form a helical membrane-spanning segment. The Cytoplasmic portion of the chain corresponds to 433–495 (IFKRFQNRQM…MLKKIGIVNT (63 aa)). Residues 496-516 (IGNFTWLFAPILVSAATFGTF) form a helical membrane-spanning segment. Residues 517 to 539 (IVLYGKTRVLSVDIVFACLSLFN) are Vacuolar-facing. A helical membrane pass occupies residues 540 to 560 (LLQFPLTMLPIVVSSVLEASV). The Cytoplasmic portion of the chain corresponds to 561–910 (AISRIYGFLT…VKWKVYWTYF (350 aa)). One can recognise an ABC transporter 1 domain in the interval 593–821 (LEIKKGTFSW…PDSQLFQLLS (229 aa)). 631 to 638 (GKVGMGKS) lines the ATP pocket. Positions 828-867 (TASSTGADTPLSRSQSVITSSTDVTSSASRSSDTVSNYPK) are disordered. Over residues 829 to 840 (ASSTGADTPLSR) the composition is skewed to polar residues. Ser839, Ser843, and Ser863 each carry phosphoserine. Low complexity predominate over residues 841–863 (SQSVITSSTDVTSSASRSSDTVS). A helical transmembrane segment spans residues 911–931 (KACSLFLIFLYFLFIIGGIGM). Positions 918 to 1202 (IFLYFLFIIG…VVRQSVDVET (285 aa)) constitute an ABC transmembrane type-1 2 domain. Over 932-968 (NVGTNVWLKHWSEVNTQLGYNPKPYFYLGIYTLFGLL) the chain is Vacuolar. The helical transmembrane segment at 969–990 (SCALISLSSLTITVFCAIKSCR) threads the bilayer. At 991–1033 (YLHDSMVKAVLRAPMSFFETTPTGRILNRFSSDVYRVDEVISR) the chain is on the cytoplasmic side. A helical transmembrane segment spans residues 1034 to 1054 (VFMFFFRNLFQIVFVLAVICY). A topological domain (vacuolar) is located at residue Ser1055. A helical transmembrane segment spans residues 1056–1076 (SPMFMILIVPLFFLYRYNQVY). Residues 1077-1147 (YTQTSRELKR…SSNRWQAIRV (71 aa)) are Cytoplasmic-facing. A helical transmembrane segment spans residues 1148–1168 (EAIGALVVFSSAFFGVLSAVR). At 1169–1172 (GNPN) the chain is on the vacuolar side. Residues 1173–1193 (SGLVGLSLSYAVQITQSLTFV) traverse the membrane as a helical segment. Residues 1194-1478 (VRQSVDVETN…YSLAKESGLI (285 aa)) are Cytoplasmic-facing. Residues 1239–1473 (IKFDHYSVRY…KASLFYSLAK (235 aa)) enclose the ABC transporter 2 domain. 1273–1280 (GRTGAGKS) is an ATP binding site.

The protein belongs to the ABC transporter superfamily. ABCC family. Conjugate transporter (TC 3.A.1.208) subfamily.

The protein resides in the vacuole membrane. In terms of biological role, involved in vacuolar sequestration of glutathione S-conjugates. Together with abc4, required for accumulation of a red pigment (ade pigment) in the vacuole of a mutant affected in the adenine biosynthetic pathway. The protein is ATP-binding cassette transporter abc2 (abc2) of Schizosaccharomyces pombe (strain 972 / ATCC 24843) (Fission yeast).